A 96-amino-acid chain; its full sequence is Putative pterin-4-alpha-carbinolamine dehydratase (96 aa).

Belongs to the pterin-4-alpha-carbinolamine dehydratase family.

It carries out the reaction (4aS,6R)-4a-hydroxy-L-erythro-5,6,7,8-tetrahydrobiopterin = (6R)-L-erythro-6,7-dihydrobiopterin + H2O. This chain is Putative pterin-4-alpha-carbinolamine dehydratase, found in Synechocystis sp. (strain ATCC 27184 / PCC 6803 / Kazusa).